The primary structure comprises 87 residues: Mitochondrial import inner membrane translocase subunit TIM9 (87 aa).

Positions 35 to 59 match the Twin CX3C motif motif; the sequence is CFDDCVNDFTSNSLTSKETSCIAKC. Disulfide bonds link Cys35/Cys59 and Cys39/Cys55.

It belongs to the small Tim family. Heterohexamer; composed of 3 copies of TIM9 and 3 copies of TIM10, named soluble 70 kDa complex. Associates with the TIM22 complex, whose core is composed of TIM22 and TIM54. Interacts with the transmembrane regions of multi-pass transmembrane proteins in transit.

Its subcellular location is the mitochondrion inner membrane. Its function is as follows. Mitochondrial intermembrane chaperone that participates in the import and insertion of multi-pass transmembrane proteins into the mitochondrial inner membrane. Also required for the transfer of beta-barrel precursors from the TOM complex to the sorting and assembly machinery (SAM complex) of the outer membrane. Acts as a chaperone-like protein that protects the hydrophobic precursors from aggregation and guide them through the mitochondrial intermembrane space. This is Mitochondrial import inner membrane translocase subunit TIM9 (TIM9) from Candida albicans (strain SC5314 / ATCC MYA-2876) (Yeast).